The sequence spans 301 residues: UDP-N-acetylenolpyruvoylglucosamine reductase 1 (301 aa).

One can recognise an FAD-binding PCMH-type domain in the interval 29–196 (KIGGPADILI…LEAEFQLQIG (168 aa)). Arginine 174 is a catalytic residue. Serine 225 (proton donor) is an active-site residue. The active site involves glutamate 295.

Belongs to the MurB family. FAD is required as a cofactor.

It localises to the cytoplasm. The catalysed reaction is UDP-N-acetyl-alpha-D-muramate + NADP(+) = UDP-N-acetyl-3-O-(1-carboxyvinyl)-alpha-D-glucosamine + NADPH + H(+). The protein operates within cell wall biogenesis; peptidoglycan biosynthesis. Its function is as follows. Cell wall formation. The polypeptide is UDP-N-acetylenolpyruvoylglucosamine reductase 1 (murB1) (Bacillus anthracis).